A 237-amino-acid polypeptide reads, in one-letter code: Purine nucleoside phosphorylase DeoD-type (237 aa).

His-5 is an a purine D-ribonucleoside binding site. Phosphate contacts are provided by residues Gly-21, Arg-25, Arg-44, and Arg-88–Ser-91. A purine D-ribonucleoside-binding positions include Glu-180–Glu-182 and Ser-204–Asp-205. Catalysis depends on Asp-205, which acts as the Proton donor.

It belongs to the PNP/UDP phosphorylase family. In terms of assembly, homohexamer; trimer of homodimers.

It catalyses the reaction a purine D-ribonucleoside + phosphate = a purine nucleobase + alpha-D-ribose 1-phosphate. It carries out the reaction a purine 2'-deoxy-D-ribonucleoside + phosphate = a purine nucleobase + 2-deoxy-alpha-D-ribose 1-phosphate. In terms of biological role, catalyzes the reversible phosphorolytic breakdown of the N-glycosidic bond in the beta-(deoxy)ribonucleoside molecules, with the formation of the corresponding free purine bases and pentose-1-phosphate. In Edwardsiella ictaluri (strain 93-146), this protein is Purine nucleoside phosphorylase DeoD-type.